Consider the following 513-residue polypeptide: MTANSEFNKRRLENIKRNNELLKKLNLAGIPARIRSEAGIEDHRKASGGAVKKKQGKAPVKREAKPAPIPTRRSRRLRGEAADVEGEAGAGSDTAQNVKQEEEWKELKEARVVGDIKLSDLIKSEDDGELLEKFRRYADKSFSGGDFFEELQRHQKPNPEVQRLREEMRLQQYDVFDPKELAIVHERVTALCFHPSQEKKLIVGGDTAGTVGLWNVADENPDPEHPDSVPDITRFKLFSRNVSKIEVFPTDSSKILAASYDGALRSIDMQSLKSDELLHFQNEHGDTLGISDCQFSYDSPNVVMLTTLGGEFAQRDLRTKPDTMNIMRLSDKKIGCMAIDPSRPYSVATASLDRTLRIWDLRKTVAKPDWSQYEDYASHEVVSTYNSRLSVSAVSYAPIDHTLVCNGYDNTVRLFNARADLPSELQPDFTIQHNCKSGRWVSVLKARFKLNMDVFAIANMKRAIDIYTSRGEQLSHLETSTVPAVVSWHPMQNWIVGGNNSGKVFLFTDAPQE.

A compositionally biased stretch (basic and acidic residues) spans 35–45; it reads RSEAGIEDHRK. Positions 35–103 are disordered; the sequence is RSEAGIEDHR…TAQNVKQEEE (69 aa). WD repeat units follow at residues 183–224, 237–277, 329–369, 386–425, 438–477, and 478–513; these read IVHE…PDPE, LFSR…SDEL, LSDK…AKPD, NSRL…PSEL, GRWV…LSHL, and ETST…APQE.

This sequence belongs to the WD repeat DDB2/WDR76 family.

In terms of biological role, DNA-binding protein that binds to both single- and double-stranded DNA. Binds preferentially to UV-damaged DNA. May be involved in DNA-metabolic processes. The protein is DNA damage-binding protein CMR1 of Eremothecium gossypii (strain ATCC 10895 / CBS 109.51 / FGSC 9923 / NRRL Y-1056) (Yeast).